A 101-amino-acid chain; its full sequence is Protein S100-A4 (101 aa).

Lys7 carries the N6-acetyllysine modification. EF-hand domains follow at residues 12-47 and 50-85; these read MVSTFHKYSGKEGDKFKLNRSELKELLMRELPSFLG and TDEAAFQKLMSNLDSNRDNEVDFQEYCVFLSCVAMM. Residues Lys28 and Glu33 each coordinate Ca(2+). The residue at position 35 (Lys35) is an N6-acetyllysine. The Ca(2+) site is built by Asp63, Asn65, Asp67, Glu69, and Glu74.

The protein belongs to the S-100 family. In terms of assembly, homodimer. Interacts with PPFIBP1 in a calcium-dependent mode. Interacts with PGLYRP1; this complex acts as a chemoattractant that promotes lymphocyte movement. Interacts with MYH9; this interaction increases cell motility. Interacts with Annexin 2/ANXA2. Interacts with TP53; this interaction promotes TP53 degradation. Interacts with CCR5 and CXCR3. Interacts with FCGR3A; this interaction inhibits PKC-dependent phosphorylation of FCGR3A.

The protein resides in the secreted. It is found in the nucleus. It localises to the cytoplasm. Calcium-binding protein that plays a role in various cellular processes including motility, angiogenesis, cell differentiation, apoptosis, and autophagy. Increases cell motility and invasiveness by interacting with non-muscle myosin heavy chain (NMMHC) IIA/MYH9. Mechanistically, promotes filament depolymerization and increases the amount of soluble myosin-IIA, resulting in the formation of stable protrusions facilitating chemotaxis. Also modulates the pro-apoptotic function of TP53 by binding to its C-terminal transactivation domain within the nucleus and reducing its protein levels. Within the extracellular space, stimulates cytokine production including granulocyte colony-stimulating factor and CCL24 from T-lymphocytes. In addition, stimulates T-lymphocyte chemotaxis by acting as a chemoattractant complex with PGLYRP1 that promotes lymphocyte migration via CCR5 and CXCR3 receptors. This chain is Protein S100-A4 (S100A4), found in Canis lupus familiaris (Dog).